Consider the following 250-residue polypeptide: 2,3-bisphosphoglycerate-dependent phosphoglycerate mutase (250 aa).

Residues 10–17, 23–24, R62, 89–92, K100, 116–117, and 185–186 each bind substrate; these read RHGESQWN, TG, ERHY, RR, and GN. H11 (tele-phosphohistidine intermediate) is an active-site residue. The active-site Proton donor/acceptor is E89.

Belongs to the phosphoglycerate mutase family. BPG-dependent PGAM subfamily. As to quaternary structure, homodimer.

It catalyses the reaction (2R)-2-phosphoglycerate = (2R)-3-phosphoglycerate. The protein operates within carbohydrate degradation; glycolysis; pyruvate from D-glyceraldehyde 3-phosphate: step 3/5. Functionally, catalyzes the interconversion of 2-phosphoglycerate and 3-phosphoglycerate. The sequence is that of 2,3-bisphosphoglycerate-dependent phosphoglycerate mutase from Escherichia coli O139:H28 (strain E24377A / ETEC).